The chain runs to 832 residues: MSDDNDKPRTRKPLGLKRSVDAGEVKQTFSHGRTNKVAVEVKRKRKLLKPGETPAPAPEPAPEPAPAPAPAPAAKKPAPKKPAPAAETPQERVARLQREAEEERLKLAEDARKRDDQKAKQNADDEKKRQEENKKAEEEAEKQAAAEAEAAAAAEAAPEEDADDGRKAPVARKFTPVARPEPKRPEKKKEEKKPARGGAKDKRRSGKLTVSKALNEDEGRRAMSLAKLKRAREKERRLKGGGSSAPREKQVRDVIVPEAITVGELAKRMGEKGADLVKELFNLDMMVTVNQTIDQDTAELLVEQFGHNIQKVSEADVDIQAEEDVDPEETLQPRPPVVTIMGHVDHGKTSLLDALRGTNVTKGEAGGITQHIGSYQVNTKSGGKVTFLDTPGHAAFSEMRQRGANVTDIVVLVVAADDGVMPQTIEAIKHTKAAGVPMIVAINKCDKPEADPDNIRNRLLEHEIIVEKLSGDVQDVEISATKKTGLDELLEKIELQAELLELKARPDRMAEATVIEAQLDKGRGPVATVLITRGTLKRGDTFVVGTESGRVRAVVNDQGKQIKEAGPSMPVEVLGLGGVPGAGDQLTVVENEQRAREVAEYRQEKATEKRTALAPTSFDTMFNNLQSNVIEWPVLVKADVQGSVEAIVTALHNISNDEIKVRVLHAGVGAITESDVTLAAASNAPIIGFNVRPNAKARELVKRDDVRMMYYDVIYHLTDEVAKEMAGELGPERIETVVGRADVKEVFKSGKKDKAAGLLVTDGVIRKGLFARLTRDDVIVSATTIASLRRFKDDVDEVRSGLECGVVLEDTNDIQPGDSLEVFEVEERERTL.

Residues 1–249 are disordered; the sequence is MSDDNDKPRT…GGGSSAPREK (249 aa). The span at 53–71 shows a compositional bias: pro residues; the sequence is TPAPAPEPAPEPAPAPAPA. Positions 89–144 are enriched in basic and acidic residues; that stretch reads PQERVARLQREAEEERLKLAEDARKRDDQKAKQNADDEKKRQEENKKAEEEAEKQA. Residues 145–156 show a composition bias toward low complexity; it reads AAEAEAAAAAEA. A compositionally biased stretch (basic and acidic residues) spans 180–200; the sequence is PEPKRPEKKKEEKKPARGGAK. Residues 333-503 enclose the tr-type G domain; the sequence is PRPPVVTIMG…ELQAELLELK (171 aa). The G1 stretch occupies residues 342-349; the sequence is GHVDHGKT. 342–349 contributes to the GTP binding site; that stretch reads GHVDHGKT. A G2 region spans residues 367-371; sequence GITQH. The tract at residues 389 to 392 is G3; it reads DTPG. Residues 389–393 and 443–446 contribute to the GTP site; these read DTPGH and NKCD. A G4 region spans residues 443–446; that stretch reads NKCD. Residues 479–481 are G5; sequence SAT.

It belongs to the TRAFAC class translation factor GTPase superfamily. Classic translation factor GTPase family. IF-2 subfamily.

The protein localises to the cytoplasm. Functionally, one of the essential components for the initiation of protein synthesis. Protects formylmethionyl-tRNA from spontaneous hydrolysis and promotes its binding to the 30S ribosomal subunits. Also involved in the hydrolysis of GTP during the formation of the 70S ribosomal complex. The chain is Translation initiation factor IF-2 from Erythrobacter litoralis (strain HTCC2594).